Reading from the N-terminus, the 511-residue chain is Keratin, type II cytoskeletal 72 (511 aa).

A head region spans residues methionine 1 to glutamine 124. The coil 1A stretch occupies residues glutamate 125–leucine 160. Residues glutamate 125–methionine 438 form the IF rod domain. Positions glutamine 161–tyrosine 179 are linker 1. Residues isoleucine 180–isoleucine 271 are coil 1B. Residues glutamine 272–isoleucine 295 form a linker 12 region. A coil 2 region spans residues isoleucine 296–glutamate 434. The tract at residues glutamate 435–arginine 511 is tail. The tract at residues glycine 486–arginine 511 is disordered.

Belongs to the intermediate filament family. As to quaternary structure, heterotetramer of two type I and two type II keratins. In terms of tissue distribution, highly expressed in hair follicles from scalp and eyebrow. Also expressed in palmoplantar epidermis. Not expressed in face skin despite the presence of fine hairs histologically. In hair, it is specifically present in the inner root sheath (IRS) of the hair follicle. Present in the IRS cuticle, but not in Henle or Huxley layers of the IRS. In the IRS cuticle, its presence is delayed up to the height of the apex of the dermal papilla (at protein level).

Has a role in hair formation. Specific component of keratin intermediate filaments in the inner root sheath (IRS) of the hair follicle. This is Keratin, type II cytoskeletal 72 (KRT72) from Homo sapiens (Human).